The following is a 197-amino-acid chain: Putative eggshell protein (197 aa).

An N-terminal signal peptide occupies residues 1–17 (MKFHLVLLLAIVPLTLA).

This is Putative eggshell protein from Fasciola hepatica (Liver fluke).